A 165-amino-acid chain; its full sequence is Cytochrome c-550-like protein (165 aa).

The N-terminal stretch at 1 to 38 (MPHLDQKLPMRWRIPSRLWAWVGILALLWLGLASPVAA) is a signal peptide. Positions 83, 86, 87, and 137 each coordinate heme c.

The protein belongs to the cytochrome c family. PsbV subfamily. The cofactor is heme c.

Its subcellular location is the cellular thylakoid membrane. Functionally, possible low-potential cytochrome c. The chain is Cytochrome c-550-like protein (psbV2) from Synechococcus sp. (strain JA-2-3B'a(2-13)) (Cyanobacteria bacterium Yellowstone B-Prime).